We begin with the raw amino-acid sequence, 1149 residues long: Potassium channel subfamily U member 1 (1149 aa).

The Extracellular portion of the chain corresponds to 1–24; that stretch reads MFQTKLRNESWEDLQKMSCTTEIQ. A helical membrane pass occupies residues 25–45; it reads VAFILSSFMTFISGLIILLIF. Topologically, residues 46–101 are cytoplasmic; that stretch reads RLIWRTVKKWQIIKGTGIILELFTSGSIRRNHVRSLHFHGRFRDRIEMLLSAQTFV. Residues 102 to 122 traverse the membrane as a helical segment; it reads GQVLVILVFVLSIGSLIIYFI. Residues 123–138 are Extracellular-facing; sequence NSADPVGSCSSYEDKT. The helical transmembrane segment at 139–159 threads the bilayer; the sequence is IPVDLVFNAFFSFYFGLRFMA. Topologically, residues 160–163 are cytoplasmic; sequence ADDK. The chain crosses the membrane as a helical span at residues 164-184; the sequence is IKFWLEMNSIVDIFTIPPTFI. The Extracellular segment spans residues 185-188; sequence SYYL. Residues 189 to 209 traverse the membrane as a helical; Voltage-sensor segment; the sequence is KSNWLGLRFLRALRLLELPRI. At 210–226 the chain is on the cytoplasmic side; sequence LQILRAIKTSNSVKFSK. A helical membrane pass occupies residues 227-247; it reads LLSIVLSTWFTAAGFIHLVEN. Topologically, residues 248 to 259 are extracellular; it reads SGDPWLKGRNSQ. Positions 260 to 282 form an intramembrane region, pore-forming; sequence NISYFDSVYLVMATTSTVGFGDV. Residues 276 to 279 carry the Selectivity for potassium motif; it reads TVGF. Residues 283–291 lie on the Extracellular side of the membrane; it reads VAKTSLGRT. The chain crosses the membrane as a helical span at residues 292-312; it reads FIIFFTLGSLILFANYIPEMV. The Cytoplasmic segment spans residues 313–1149; that stretch reads ELFANKRKYT…EDPFAYSEPL (837 aa). RCK N-terminal domains follow at residues 331–473 and 713–884; these read KKFI…DNII and RNHI…EGSL. Over residues 829-845 the composition is skewed to low complexity; that stretch reads IDSSSDSSPSVSEETAS. Disordered regions lie at residues 829 to 851 and 1106 to 1149; these read IDSS…NGHN and ARNQ…SEPL. Positions 1106 to 1120 are enriched in polar residues; it reads ARNQIRTNSSITSQK.

It belongs to the potassium channel family. Calcium-activated (TC 1.A.1.3) subfamily. KCa5.1/KCNU1 sub-subfamily. As to quaternary structure, homotetramer; which constitutes the calcium-activated potassium channel. Interacts with LRRC52; this interaction changes some channel gating properties, such as shifting gating to more negative potentials at a given pH. As to expression, testis-specific.

It localises to the cell membrane. It is found in the cell projection. The protein localises to the cilium. The protein resides in the flagellum membrane. It catalyses the reaction K(+)(in) = K(+)(out). Regulated by changes in cytosolic pH; activated by alkalization. VU0546110 acts as a selective inhibitor. The auxiliary subunit LRRC52 shifts the activation of KCNU1 to more negative potentials at a given pH. Testis-specific potassium channel activated by both intracellular pH and membrane voltage that mediates export of K(+). Represents the primary spermatozoan K(+) current. The channel underlies a pH-triggered membrane hyperpolarization during the process of sperm capacitation, as sperm encounter the alkaline environment near the ovum in the female reproductive tract, thereby playing an essential for male fertility. The polypeptide is Potassium channel subfamily U member 1 (KCNU1) (Macaca fascicularis (Crab-eating macaque)).